Here is a 258-residue protein sequence, read N- to C-terminus: Imidazole glycerol phosphate synthase subunit HisF (258 aa).

Residues aspartate 11 and aspartate 130 contribute to the active site.

Belongs to the HisA/HisF family. Heterodimer of HisH and HisF.

It localises to the cytoplasm. It catalyses the reaction 5-[(5-phospho-1-deoxy-D-ribulos-1-ylimino)methylamino]-1-(5-phospho-beta-D-ribosyl)imidazole-4-carboxamide + L-glutamine = D-erythro-1-(imidazol-4-yl)glycerol 3-phosphate + 5-amino-1-(5-phospho-beta-D-ribosyl)imidazole-4-carboxamide + L-glutamate + H(+). The protein operates within amino-acid biosynthesis; L-histidine biosynthesis; L-histidine from 5-phospho-alpha-D-ribose 1-diphosphate: step 5/9. Its function is as follows. IGPS catalyzes the conversion of PRFAR and glutamine to IGP, AICAR and glutamate. The HisF subunit catalyzes the cyclization activity that produces IGP and AICAR from PRFAR using the ammonia provided by the HisH subunit. The protein is Imidazole glycerol phosphate synthase subunit HisF of Salmonella arizonae (strain ATCC BAA-731 / CDC346-86 / RSK2980).